The chain runs to 203 residues: MGFLACALLVVATAHAATAIVNPETCEIGSNFKNYCNNCYCFDGVMDHALCTRESCDRNVWNEDGTRKFPKPGKWISEKENKKNDEPCTPGENFKYYCNDCQCLDGLRAHAMCTRMRCDRNVFNEDGTRKYPEPEKWNSEKERKKSDESCAPGASFKYYCNSCTCGAEGKVAEAQCTSQECDRYKWKKDGSKRPFTLDPVLHD.

Positions 1–19 (MGFLACALLVVATAHAATA) are cleaved as a signal peptide. Pacifastin domains are found at residues 23-59 (PETCEIGSNFKNYCNNCYCFDGVMDHALCTRESCDRN), 85-121 (DEPCTPGENFKYYCNDCQCLDGLRAHAMCTRMRCDRN), and 147-184 (DESCAPGASFKYYCNSCTCGAEGKVAEAQCTSQECDRY). Cystine bridges form between Cys26-Cys41, Cys36-Cys56, Cys39-Cys51, Cys88-Cys103, Cys98-Cys118, and Cys101-Cys113. Positions 129–148 (RKYPEPEKWNSEKERKKSDE) are enriched in basic and acidic residues. The disordered stretch occupies residues 129 to 150 (RKYPEPEKWNSEKERKKSDESC). Intrachain disulfides connect Cys150/Cys165, Cys160/Cys181, and Cys163/Cys176.

The protein belongs to the protease inhibitor I19 family. In terms of tissue distribution, expressed by the venom gland.

It localises to the secreted. Functionally, inhibits trypsin activity and prophenoloxidase (PPO) activation, an enzyme essential for both clotting and insect innate immune responses. It does not inhibit activity of chymotrypsin and protease K, and has no effect on phenoloxidase (PO) activity. The protein is Pacifastin-like protease inhibitor cvp4 of Pimpla hypochondriaca (Parasitoid wasp).